Here is a 227-residue protein sequence, read N- to C-terminus: MPGCRISACGPGAQEGTAEQRSPPPPWDPMPSSQPPPPTPTLTPTPTPGQSPPLPDAAGASAGAAEDQELQRWRQGASGIAGLAGPGGGSGAAAGAGGRALELAEARRRLLEVEGRRRLVSELESRVLQLHRVFLAAELRLAHRAESLSRLSGGVAQAELYLAAHGSRLKKGPRRGRRGRPPALLASALGLGGCVPWGAGRLRRGHGPEPDSPFRRSPPRGPASPQR.

Disordered regions lie at residues 1 to 72 (MPGC…ELQR) and 200 to 227 (GRLRRGHGPEPDSPFRRSPPRGPASPQR). The span at 22–55 (SPPPPWDPMPSSQPPPPTPTLTPTPTPGQSPPLP) shows a compositional bias: pro residues.

As to quaternary structure, interacts with TMF1; may regulate TRNP1 proteasomal degradation. In terms of processing, ubiquitinated, leading to its degradation by the proteasome.

The protein resides in the nucleus. DNA-binding factor that regulates the expression of a subset of genes and plays a key role in tangential, radial, and lateral expansion of the brain neocortex. Regulates neural stem cells proliferation and the production of intermediate neural progenitors and basal radial glial cells affecting the process of cerebral cortex gyrification. May control the proliferation rate of cells by regulating their progression through key cell-cycle transition points. This chain is TMF-regulated nuclear protein 1 (TRNP1), found in Homo sapiens (Human).